We begin with the raw amino-acid sequence, 360 residues long: Phospho-N-acetylmuramoyl-pentapeptide-transferase (360 aa).

The next 10 membrane-spanning stretches (helical) occupy residues 3–23 (SILV…PYLI), 52–72 (MGGV…HLTV), 81–101 (GLLV…DDFI), 115–135 (AKLV…MQFA), 153–173 (ITVI…AISG), 187–207 (LAGG…FWQF), 230–250 (IALV…WNAA), 254–274 (IFMG…LSMV), 282–302 (IIIG…IVVF), and 333–353 (FWVL…ADWL).

It belongs to the glycosyltransferase 4 family. MraY subfamily. The cofactor is Mg(2+).

The protein resides in the cell membrane. The enzyme catalyses UDP-N-acetyl-alpha-D-muramoyl-L-alanyl-gamma-D-glutamyl-meso-2,6-diaminopimeloyl-D-alanyl-D-alanine + di-trans,octa-cis-undecaprenyl phosphate = di-trans,octa-cis-undecaprenyl diphospho-N-acetyl-alpha-D-muramoyl-L-alanyl-D-glutamyl-meso-2,6-diaminopimeloyl-D-alanyl-D-alanine + UMP. It functions in the pathway cell wall biogenesis; peptidoglycan biosynthesis. Its function is as follows. Catalyzes the initial step of the lipid cycle reactions in the biosynthesis of the cell wall peptidoglycan: transfers peptidoglycan precursor phospho-MurNAc-pentapeptide from UDP-MurNAc-pentapeptide onto the lipid carrier undecaprenyl phosphate, yielding undecaprenyl-pyrophosphoryl-MurNAc-pentapeptide, known as lipid I. This chain is Phospho-N-acetylmuramoyl-pentapeptide-transferase, found in Saccharopolyspora erythraea (strain ATCC 11635 / DSM 40517 / JCM 4748 / NBRC 13426 / NCIMB 8594 / NRRL 2338).